Here is a 502-residue protein sequence, read N- to C-terminus: Aspartyl/glutamyl-tRNA(Asn/Gln) amidotransferase subunit B (502 aa).

The protein belongs to the GatB/GatE family. GatB subfamily. Heterotrimer of A, B and C subunits.

The catalysed reaction is L-glutamyl-tRNA(Gln) + L-glutamine + ATP + H2O = L-glutaminyl-tRNA(Gln) + L-glutamate + ADP + phosphate + H(+). The enzyme catalyses L-aspartyl-tRNA(Asn) + L-glutamine + ATP + H2O = L-asparaginyl-tRNA(Asn) + L-glutamate + ADP + phosphate + 2 H(+). Its function is as follows. Allows the formation of correctly charged Asn-tRNA(Asn) or Gln-tRNA(Gln) through the transamidation of misacylated Asp-tRNA(Asn) or Glu-tRNA(Gln) in organisms which lack either or both of asparaginyl-tRNA or glutaminyl-tRNA synthetases. The reaction takes place in the presence of glutamine and ATP through an activated phospho-Asp-tRNA(Asn) or phospho-Glu-tRNA(Gln). This is Aspartyl/glutamyl-tRNA(Asn/Gln) amidotransferase subunit B from Brucella suis (strain ATCC 23445 / NCTC 10510).